The primary structure comprises 386 residues: Formate-dependent phosphoribosylglycinamide formyltransferase (386 aa).

N(1)-(5-phospho-beta-D-ribosyl)glycinamide-binding positions include 15–16 and E75; that span reads EL. ATP-binding positions include R107, K148, 153–158, 188–191, and E196; these read SSGKGQ and EQFI. One can recognise an ATP-grasp domain in the interval 112 to 301; that stretch reads ALAAQQLNLQ…EFELHLRAIV (190 aa). Residues E260 and E272 each contribute to the Mg(2+) site. N(1)-(5-phospho-beta-D-ribosyl)glycinamide contacts are provided by residues D279, K349, and 356 to 357; that span reads RR.

It belongs to the PurK/PurT family. In terms of assembly, homodimer.

It carries out the reaction N(1)-(5-phospho-beta-D-ribosyl)glycinamide + formate + ATP = N(2)-formyl-N(1)-(5-phospho-beta-D-ribosyl)glycinamide + ADP + phosphate + H(+). The protein operates within purine metabolism; IMP biosynthesis via de novo pathway; N(2)-formyl-N(1)-(5-phospho-D-ribosyl)glycinamide from N(1)-(5-phospho-D-ribosyl)glycinamide (formate route): step 1/1. Its function is as follows. Involved in the de novo purine biosynthesis. Catalyzes the transfer of formate to 5-phospho-ribosyl-glycinamide (GAR), producing 5-phospho-ribosyl-N-formylglycinamide (FGAR). Formate is provided by PurU via hydrolysis of 10-formyl-tetrahydrofolate. This Francisella tularensis subsp. novicida (strain U112) protein is Formate-dependent phosphoribosylglycinamide formyltransferase.